The primary structure comprises 470 residues: 4-O-methyltransferase 1 (470 aa).

Residues 274 to 275, D297, 328 to 329, and K344 contribute to the S-adenosyl-L-methionine site; these read GG and DC. H348 functions as the Proton acceptor in the catalytic mechanism.

It belongs to the class I-like SAM-binding methyltransferase superfamily. Cation-independent O-methyltransferase family. COMT subfamily.

S-adenosyl-L-methionine-dependent methyltransferase that preferentially catalyzes the methylation of 4-OH phenolic compounds like coniferyl alcohol, vanillyl alcohol and ferrulic acid. May play a role in promoting lignin degradation by methylating and inactivating free-hydroxyl phenolic compounds, products of lignin cleavage which are known inhibitors of lignin peroxidases. The chain is 4-O-methyltransferase 1 from Phanerochaete chrysosporium (strain RP-78 / ATCC MYA-4764 / FGSC 9002) (White-rot fungus).